The following is a 490-amino-acid chain: Betaine aldehyde dehydrogenase (490 aa).

Position 93 (D93) interacts with K(+). 150-152 (GAW) is an NAD(+) binding site. Catalysis depends on K162, which acts as the Charge relay system. Residue 176–179 (KPSE) participates in NAD(+) binding. K(+) is bound at residue V180. Residue 230–233 (GIAS) coordinates NAD(+). L246 provides a ligand contact to K(+). E252 (proton acceptor) is an active-site residue. NAD(+) is bound by residues G254, C286, and E387. The active-site Nucleophile is C286. The residue at position 286 (C286) is a Cysteine sulfenic acid (-SOH). K(+) is bound by residues K457 and G460. E464 serves as the catalytic Charge relay system.

It belongs to the aldehyde dehydrogenase family. In terms of assembly, dimer of dimers. It depends on K(+) as a cofactor.

It carries out the reaction betaine aldehyde + NAD(+) + H2O = glycine betaine + NADH + 2 H(+). It functions in the pathway amine and polyamine biosynthesis; betaine biosynthesis via choline pathway; betaine from betaine aldehyde: step 1/1. Involved in the biosynthesis of the osmoprotectant glycine betaine. Catalyzes the irreversible oxidation of betaine aldehyde to the corresponding acid. This is Betaine aldehyde dehydrogenase from Yersinia pseudotuberculosis serotype O:1b (strain IP 31758).